A 62-amino-acid chain; its full sequence is UPF0434 protein Rleg2_3773 (62 aa).

It belongs to the UPF0434 family.

This is UPF0434 protein Rleg2_3773 from Rhizobium leguminosarum bv. trifolii (strain WSM2304).